A 582-amino-acid polypeptide reads, in one-letter code: Bifunctional lycopene cyclase/phytoene synthase (582 aa).

Positions 1–261 (MNQNGTRLCY…VVLGLVGCDY (261 aa)) are lycopene beta-cyclase. The next 6 helical transmembrane spans lie at 34 to 54 (CTYT…FFTA), 59 to 79 (KICI…SYLI), 99 to 121 (IPIE…YCIF), 142 to 162 (YVVA…LLLG), 170 to 190 (LILV…YPFL), and 242 to 262 (ALFF…CDYA). Residues 268 to 582 (YESLSQPASD…LLSALVYRLE (315 aa)) form a phytoene synthase region.

It in the N-terminal section; belongs to the lycopene beta-cyclase family. This sequence in the C-terminal section; belongs to the phytoene/squalene synthase family.

It is found in the membrane. It carries out the reaction all-trans-lycopene = gamma-carotene. The enzyme catalyses gamma-carotene = all-trans-beta-carotene. The catalysed reaction is 2 (2E,6E,10E)-geranylgeranyl diphosphate = 15-cis-phytoene + 2 diphosphate. It functions in the pathway carotenoid biosynthesis; beta-carotene biosynthesis. The protein operates within carotenoid biosynthesis; phytoene biosynthesis; all-trans-phytoene from geranylgeranyl diphosphate: step 1/1. Bifunctional enzyme that catalyzes the reactions from geranylgeranyl diphosphate to phytoene (phytoene synthase) and lycopene to beta-carotene via the intermediate gamma-carotene (lycopene cyclase). This chain is Bifunctional lycopene cyclase/phytoene synthase, found in Aspergillus niger (strain ATCC MYA-4892 / CBS 513.88 / FGSC A1513).